The primary structure comprises 1367 residues: DNA polymerase III PolC-type (1367 aa).

The Exonuclease domain maps to Phe-358–Phe-513.

This sequence belongs to the DNA polymerase type-C family. PolC subfamily.

It localises to the cytoplasm. The enzyme catalyses DNA(n) + a 2'-deoxyribonucleoside 5'-triphosphate = DNA(n+1) + diphosphate. Functionally, required for replicative DNA synthesis. This DNA polymerase also exhibits 3' to 5' exonuclease activity. The polypeptide is DNA polymerase III PolC-type (Thermotoga petrophila (strain ATCC BAA-488 / DSM 13995 / JCM 10881 / RKU-1)).